A 53-amino-acid polypeptide reads, in one-letter code: Large ribosomal subunit protein eL40 (53 aa).

It belongs to the eukaryotic ribosomal protein eL40 family.

The chain is Large ribosomal subunit protein eL40 from Pyrobaculum aerophilum (strain ATCC 51768 / DSM 7523 / JCM 9630 / CIP 104966 / NBRC 100827 / IM2).